A 241-amino-acid polypeptide reads, in one-letter code: Biosynthetic peptidoglycan transglycosylase (241 aa).

Residues 18–38 traverse the membrane as a helical segment; the sequence is GVIGIIALWMAGILIFAFLPV.

The protein belongs to the glycosyltransferase 51 family.

It is found in the cell inner membrane. It carries out the reaction [GlcNAc-(1-&gt;4)-Mur2Ac(oyl-L-Ala-gamma-D-Glu-L-Lys-D-Ala-D-Ala)](n)-di-trans,octa-cis-undecaprenyl diphosphate + beta-D-GlcNAc-(1-&gt;4)-Mur2Ac(oyl-L-Ala-gamma-D-Glu-L-Lys-D-Ala-D-Ala)-di-trans,octa-cis-undecaprenyl diphosphate = [GlcNAc-(1-&gt;4)-Mur2Ac(oyl-L-Ala-gamma-D-Glu-L-Lys-D-Ala-D-Ala)](n+1)-di-trans,octa-cis-undecaprenyl diphosphate + di-trans,octa-cis-undecaprenyl diphosphate + H(+). The protein operates within cell wall biogenesis; peptidoglycan biosynthesis. Peptidoglycan polymerase that catalyzes glycan chain elongation from lipid-linked precursors. This is Biosynthetic peptidoglycan transglycosylase from Yersinia pestis bv. Antiqua (strain Antiqua).